Here is a 171-residue protein sequence, read N- to C-terminus: 6,7-dimethyl-8-ribityllumazine synthase (171 aa).

Residues Phe-24, 58–60 (ALE), and 82–84 (AVI) each bind 5-amino-6-(D-ribitylamino)uracil. 87–88 (ET) contacts (2S)-2-hydroxy-3-oxobutyl phosphate. Catalysis depends on His-90, which acts as the Proton donor. Position 115 (Asn-115) interacts with 5-amino-6-(D-ribitylamino)uracil. Arg-129 is a binding site for (2S)-2-hydroxy-3-oxobutyl phosphate. Residues 150–171 (ALDQLGDDEDEEEDEEDEEERA) form a disordered region. The segment covering 154 to 171 (LGDDEDEEEDEEDEEERA) has biased composition (acidic residues).

The protein belongs to the DMRL synthase family.

The enzyme catalyses (2S)-2-hydroxy-3-oxobutyl phosphate + 5-amino-6-(D-ribitylamino)uracil = 6,7-dimethyl-8-(1-D-ribityl)lumazine + phosphate + 2 H2O + H(+). It participates in cofactor biosynthesis; riboflavin biosynthesis; riboflavin from 2-hydroxy-3-oxobutyl phosphate and 5-amino-6-(D-ribitylamino)uracil: step 1/2. In terms of biological role, catalyzes the formation of 6,7-dimethyl-8-ribityllumazine by condensation of 5-amino-6-(D-ribitylamino)uracil with 3,4-dihydroxy-2-butanone 4-phosphate. This is the penultimate step in the biosynthesis of riboflavin. This is 6,7-dimethyl-8-ribityllumazine synthase from Burkholderia ambifaria (strain ATCC BAA-244 / DSM 16087 / CCUG 44356 / LMG 19182 / AMMD) (Burkholderia cepacia (strain AMMD)).